A 190-amino-acid chain; its full sequence is Elongation factor P (190 aa).

It belongs to the elongation factor P family.

It is found in the cytoplasm. Its pathway is protein biosynthesis; polypeptide chain elongation. Functionally, involved in peptide bond synthesis. Stimulates efficient translation and peptide-bond synthesis on native or reconstituted 70S ribosomes in vitro. Probably functions indirectly by altering the affinity of the ribosome for aminoacyl-tRNA, thus increasing their reactivity as acceptors for peptidyl transferase. This is Elongation factor P (efp) from Mycoplasma pneumoniae (strain ATCC 29342 / M129 / Subtype 1) (Mycoplasmoides pneumoniae).